The primary structure comprises 427 residues: GTPase ERA-like, chloroplastic (427 aa).

The N-terminal 39 residues, 1-39 (MAVSPHISPTLSRYKFFSTSVVENPNFSPYRIYSRRRVT), are a transit peptide targeting the chloroplast. The Era-type G domain occupies 128 to 298 (RSGYVAVVGM…KEWILSKLPF (171 aa)). The interval 136-143 (GMPNVGKS) is G1. 136–143 (GMPNVGKS) provides a ligand contact to GTP. The segment at 162 to 166 (QTTRH) is G2. The tract at residues 183-186 (DTPG) is G3. Residues 183–187 (DTPGV) and 248–251 (NKKD) contribute to the GTP site. Residues 248-251 (NKKD) are G4. The interval 277-279 (VSA) is G5. The KH type-2 domain maps to 329–406 (YRNEVPYACQ…FLEVEVKVKE (78 aa)).

This sequence belongs to the TRAFAC class TrmE-Era-EngA-EngB-Septin-like GTPase superfamily. Era GTPase family.

It localises to the plastid. The protein resides in the chloroplast stroma. Its subcellular location is the chloroplast nucleoid. Nuclear genome-encoded probable GTPase involved in ribosome biogenesis in chloroplasts. Plays a role in 16S rRNA maturation in plastids and may contribute to the assembly of the small (30S) ribosomal subunit. In Arabidopsis thaliana (Mouse-ear cress), this protein is GTPase ERA-like, chloroplastic.